We begin with the raw amino-acid sequence, 273 residues long: MATYQPYNEYSSVTGGGFENSESRPGSGESETNTRVNTLTPVTIKQILESKQDIQDGPFVSHNQELHHVCFVGVVRNITDHTANIFLTIEDGTGQIEVRKWSEDANDLAAGNDDSSGKGYGSQVAQQFEIGGYVKVFGALKEFGGKKNIQYAVIKPIDSFNEVLTHHLEVIKCHSIASGMMKQPLESASNNNGQSLFVKDDNDTSSGSSPLQRILEFCKKQCEGKDANSFAVPIPLISQSLNLDETTVRNCCTTLTDQGFIYPTFDDNNFFAL.

Residues 1-13 (MATYQPYNEYSSV) are compositionally biased toward polar residues. The segment at 1–38 (MATYQPYNEYSSVTGGGFENSESRPGSGESETNTRVNT) is disordered. A Phosphoserine modification is found at serine 27. Over residues 29–38 (ESETNTRVNT) the composition is skewed to polar residues. Positions 69–157 (VCFVGVVRNI…NIQYAVIKPI (89 aa)) form a DNA-binding region, OB. A Phosphoserine modification is found at serine 122.

This sequence belongs to the replication factor A protein 2 family. In terms of assembly, heterotrimer of 69, 36, and 13 kDa chains. The DNA-binding activity may reside exclusively on the 69 kDa subunit. Interacts with MCM10. In terms of processing, phosphorylated in a cell cycle-dependent manner with phosphorylation increasing at the entry in S phase and dephosphorylation occurring at mitosis. Post-translationally, the N-terminus is blocked.

Its subcellular location is the nucleus. In terms of biological role, binds to single-stranded sequences participating in DNA replication in addition to those mediating transcriptional repression (URS1) and activation (CAR1). Stimulates the activity of a cognate strand exchange protein (SEP1). It cooperates with T-AG and DNA topoisomerase I to unwind template DNA containing the simian virus 40 origin of DNA replication. The polypeptide is Replication factor A protein 2 (RFA2) (Saccharomyces cerevisiae (strain ATCC 204508 / S288c) (Baker's yeast)).